Reading from the N-terminus, the 249-residue chain is MAGHSKWATTKHKKAVIDARRGKLFAKLIKNIEVAARTGGGDPDGNPTLYDAIQKAKKNSVPLDNIERARKRGAGEEAGGADWETIMYEGYAPGGVALLVECLTDNRNRAASEVRVAVTRNGGSMADAGSVSYLFNRKGLVVVPKEGTTEDDVTLAVLDAGAEDVNDVGEAFEVICEPSDLVAVRTALQEAGIEYESAELSFIPSVEVPLDEEGARKVMRLVDALEDSDDVQNVYTNADIPDEIMAKIS.

The protein belongs to the TACO1 family.

It is found in the cytoplasm. The polypeptide is Probable transcriptional regulatory protein Tfu_2096 (Thermobifida fusca (strain YX)).